Consider the following 72-residue polypeptide: Translation initiation factor IF-1 (72 aa).

The region spanning 1–72 is the S1-like domain; that stretch reads MAKEDNIEMQ…TKGRIVFRAR (72 aa).

It belongs to the IF-1 family. As to quaternary structure, component of the 30S ribosomal translation pre-initiation complex which assembles on the 30S ribosome in the order IF-2 and IF-3, IF-1 and N-formylmethionyl-tRNA(fMet); mRNA recruitment can occur at any time during PIC assembly.

It localises to the cytoplasm. Its function is as follows. One of the essential components for the initiation of protein synthesis. Stabilizes the binding of IF-2 and IF-3 on the 30S subunit to which N-formylmethionyl-tRNA(fMet) subsequently binds. Helps modulate mRNA selection, yielding the 30S pre-initiation complex (PIC). Upon addition of the 50S ribosomal subunit IF-1, IF-2 and IF-3 are released leaving the mature 70S translation initiation complex. The sequence is that of Translation initiation factor IF-1 from Shewanella baltica (strain OS155 / ATCC BAA-1091).